The primary structure comprises 197 residues: FMN-dependent NADH:quinone oxidoreductase (197 aa).

Ser-10 contributes to the FMN binding site.

The protein belongs to the azoreductase type 1 family. Homodimer. FMN serves as cofactor.

The catalysed reaction is 2 a quinone + NADH + H(+) = 2 a 1,4-benzosemiquinone + NAD(+). The enzyme catalyses N,N-dimethyl-1,4-phenylenediamine + anthranilate + 2 NAD(+) = 2-(4-dimethylaminophenyl)diazenylbenzoate + 2 NADH + 2 H(+). Functionally, quinone reductase that provides resistance to thiol-specific stress caused by electrophilic quinones. Its function is as follows. Also exhibits azoreductase activity. Catalyzes the reductive cleavage of the azo bond in aromatic azo compounds to the corresponding amines. This Mycoplasma genitalium (strain ATCC 33530 / DSM 19775 / NCTC 10195 / G37) (Mycoplasmoides genitalium) protein is FMN-dependent NADH:quinone oxidoreductase.